The following is a 663-amino-acid chain: UvrABC system protein B (663 aa).

Residues 31-418 (DNIEGGEKAQ…TDTVVEQIIR (388 aa)) enclose the Helicase ATP-binding domain. 44–51 (GATGTGKT) provides a ligand contact to ATP. The Beta-hairpin signature appears at 97–120 (YYDYYQPEAYVPSSDTYIEKDSSV). In terms of domain architecture, Helicase C-terminal spans 435–601 (QMDDLLGEIN…TIKKEIRDLI (167 aa)). One can recognise a UVR domain in the interval 627-662 (QAEIKALQQQMQEAAELLDFELAAQIRDVILELKAI).

The protein belongs to the UvrB family. In terms of assembly, forms a heterotetramer with UvrA during the search for lesions. Interacts with UvrC in an incision complex.

It is found in the cytoplasm. Its function is as follows. The UvrABC repair system catalyzes the recognition and processing of DNA lesions. A damage recognition complex composed of 2 UvrA and 2 UvrB subunits scans DNA for abnormalities. Upon binding of the UvrA(2)B(2) complex to a putative damaged site, the DNA wraps around one UvrB monomer. DNA wrap is dependent on ATP binding by UvrB and probably causes local melting of the DNA helix, facilitating insertion of UvrB beta-hairpin between the DNA strands. Then UvrB probes one DNA strand for the presence of a lesion. If a lesion is found the UvrA subunits dissociate and the UvrB-DNA preincision complex is formed. This complex is subsequently bound by UvrC and the second UvrB is released. If no lesion is found, the DNA wraps around the other UvrB subunit that will check the other stand for damage. This chain is UvrABC system protein B, found in Streptococcus agalactiae serotype III (strain NEM316).